A 491-amino-acid chain; its full sequence is Cytochrome P450 2H1 (491 aa).

Cys436 is a binding site for heme.

Belongs to the cytochrome P450 family. Heme serves as cofactor. Expressed in liver.

It localises to the endoplasmic reticulum membrane. The protein resides in the microsome membrane. It catalyses the reaction an organic molecule + reduced [NADPH--hemoprotein reductase] + O2 = an alcohol + oxidized [NADPH--hemoprotein reductase] + H2O + H(+). In terms of biological role, cytochromes P450 are a group of heme-thiolate monooxygenases. In liver microsomes, this enzyme is involved in an NADPH-dependent electron transport pathway. It oxidizes a variety of structurally unrelated compounds, including steroids, fatty acids, and xenobiotics. The polypeptide is Cytochrome P450 2H1 (CYP2H1) (Gallus gallus (Chicken)).